Here is a 269-residue protein sequence, read N- to C-terminus: MTVGVFAALGEEVARVRECLGGVGTERAGLTFYVVSVGALQVVYVCGGVGKVNAALCTQLLISEFGARVLINTGIAGALDERLCVFDVLVSVDAVQHDVDVTAFGYQKGRIPRMDSVEWTANTALRYLVREAFDLCTRDPEWTEGACALSGSGDPPSRVSRLVEGRVASGDLFVSDAQTRARIIREFGAHGVEMEGAAFAHVASVNGVPFVIIRCISDGAGAEQDVSMSYKEFSTRAARRSALLTLRVLERLSALRTSVVASLFPMVVV.

The Proton acceptor role is filled by glutamate 12. Substrate-binding positions include glycine 77, valine 174, and 194–195 (ME). Aspartate 218 serves as the catalytic Proton donor.

This sequence belongs to the PNP/UDP phosphorylase family. MtnN subfamily.

The catalysed reaction is S-adenosyl-L-homocysteine + H2O = S-(5-deoxy-D-ribos-5-yl)-L-homocysteine + adenine. The enzyme catalyses S-methyl-5'-thioadenosine + H2O = 5-(methylsulfanyl)-D-ribose + adenine. It carries out the reaction 5'-deoxyadenosine + H2O = 5-deoxy-D-ribose + adenine. It functions in the pathway amino-acid biosynthesis; L-methionine biosynthesis via salvage pathway; S-methyl-5-thio-alpha-D-ribose 1-phosphate from S-methyl-5'-thioadenosine (hydrolase route): step 1/2. In terms of biological role, catalyzes the irreversible cleavage of the glycosidic bond in both 5'-methylthioadenosine (MTA) and S-adenosylhomocysteine (SAH/AdoHcy) to adenine and the corresponding thioribose, 5'-methylthioribose and S-ribosylhomocysteine, respectively. Also cleaves 5'-deoxyadenosine, a toxic by-product of radical S-adenosylmethionine (SAM) enzymes, into 5-deoxyribose and adenine. The protein is 5'-methylthioadenosine/S-adenosylhomocysteine nucleosidase (mtnN) of Treponema pallidum (strain Nichols).